The chain runs to 401 residues: MFRSNLEGSGAAAVGVANPPSLAQSGKIFQLQDNFSAFHARGGLNILGLQDMYLDTSGANSSATLSPPITPVTPDPSTSAQSTHFPFLADSAATANSLLMQRQYHYHLLLQQQQQLAMAQHQLALAASAAAASASHQQTDEIARSLKIFAQVTTGAAENAAGSMQDVMQEFATNGYASDDLGRMSYGSAPPQVQMPPQQQHQQQQGLHLPLGRNPAQLQTNGGNLMPIPLATHWLNNYREHLNNVWRNMSYIPAAPNTMGLQAQTAATVSTNLGVGMGLGLPVQGEQLRGASNSSNNNNNNNKVYKRYNSKAKEISRHCVFCENNNEPEAVINSHSVRDNFNRVLCPKLRTYVCPICGASGDSAHTIKYCPKKPIITMEDAIKAESFRLAKSSYYKQQMKV.

The tract at residues 181 to 207 is disordered; the sequence is LGRMSYGSAPPQVQMPPQQQHQQQQGL. The segment covering 190-205 has biased composition (low complexity); the sequence is PPQVQMPPQQQHQQQQ. The Nanos-type zinc finger occupies 318–372; it reads HCVFCENNNEPEAVINSHSVRDNFNRVLCPKLRTYVCPICGASGDSAHTIKYCPK. Residues C319, C322, H335, C346, C354, C357, H365, and C370 each coordinate Zn(2+). Short sequence motifs (C2HC) lie at residues 319–346 and 354–370; these read CVFC…RVLC and CPIC…IKYC.

It belongs to the nanos family. As to quaternary structure, interacts with pum and brat. Interacts with cup. Interacts with mei-P26; possibly involved in regulation of brat levels. Interacts with wh; may be involved in mei-P26-dependent derepression of the BMP signaling pathway. Acts via the formation of a quaternary complex composed of pum, nanos, brat and the 3'-UTR mRNA of hb. Binds RNA with no specificity. In terms of tissue distribution, posterior part of the embryo. While the transcript is present throughout the embryo, nanos translation is controlled by smg, and the protein is found in pole plasm and pole cells. In the female ovary expressed in germline stem cells, precystoblasts and in maturing cystoblasts; in early cystoblasts expression is post-transcriptionally repressed by bam in a 3'UTR-dependent manner.

Its subcellular location is the cytoplasm. It is found in the cytoplasmic ribonucleoprotein granule. Maternal RNA-binding protein that is required for germ cells proliferation and self-renewal. Acts by forming a complex with pum and brat that regulates translation and mRNA stability. The complex binds to the Nanos Response Element (NRE), a 16 bp sequence in the hb mRNA 3'-UTR and prevents its translation. Controls posterior development. Rescuing factor for the abdominal defect of posterior group mutants. The other posterior group genes are not required for nanos function but rather play a role in localization or distribution of nanos protein. In Drosophila melanogaster (Fruit fly), this protein is Protein nanos.